A 360-amino-acid polypeptide reads, in one-letter code: Chorismate synthase (360 aa).

NADP(+) contacts are provided by arginine 48 and arginine 54. FMN contacts are provided by residues 125–127, 246–247, glycine 286, 301–305, and arginine 327; these read RSS, NA, and KPTSS.

This sequence belongs to the chorismate synthase family. Homotetramer. It depends on FMNH2 as a cofactor.

It catalyses the reaction 5-O-(1-carboxyvinyl)-3-phosphoshikimate = chorismate + phosphate. It participates in metabolic intermediate biosynthesis; chorismate biosynthesis; chorismate from D-erythrose 4-phosphate and phosphoenolpyruvate: step 7/7. Catalyzes the anti-1,4-elimination of the C-3 phosphate and the C-6 proR hydrogen from 5-enolpyruvylshikimate-3-phosphate (EPSP) to yield chorismate, which is the branch point compound that serves as the starting substrate for the three terminal pathways of aromatic amino acid biosynthesis. This reaction introduces a second double bond into the aromatic ring system. The sequence is that of Chorismate synthase from Actinobacillus succinogenes (strain ATCC 55618 / DSM 22257 / CCUG 43843 / 130Z).